We begin with the raw amino-acid sequence, 236 residues long: Small ribosomal subunit protein uS2c (236 aa).

The protein belongs to the universal ribosomal protein uS2 family.

It localises to the plastid. The protein localises to the chloroplast. The polypeptide is Small ribosomal subunit protein uS2c (rps2) (Crucihimalaya wallichii (Rock-cress)).